Here is a 132-residue protein sequence, read N- to C-terminus: MAFDGTWKVDRSENYEKFMEVMGVNIVKRKLGAHDNLKVIIQQDGNNFTVKESSTFRNIEIKFTLAQPFEYSLADGTELNGAWFLQDNQLLGTFTRKDNGKVLQTTRQIIGDELVQTYEYEGTESKRIFKRG.

The residue at position 2 (Ala2) is an N-acetylalanine. Residues Trp83 and Arg107 each coordinate hexadecanoate. The tetradecanoate site is built by Trp83 and Arg107.

The protein belongs to the calycin superfamily. Fatty-acid binding protein (FABP) family.

The protein resides in the cytoplasm. Its function is as follows. FABPs are thought to play a role in the intracellular transport of long-chain fatty acids and their acyl-CoA esters. This is Fatty acid-binding protein, intestinal (fabp2) from Xenopus laevis (African clawed frog).